Consider the following 369-residue polypeptide: Aminomethyltransferase (369 aa).

Belongs to the GcvT family. The glycine cleavage system is composed of four proteins: P, T, L and H.

It carries out the reaction N(6)-[(R)-S(8)-aminomethyldihydrolipoyl]-L-lysyl-[protein] + (6S)-5,6,7,8-tetrahydrofolate = N(6)-[(R)-dihydrolipoyl]-L-lysyl-[protein] + (6R)-5,10-methylene-5,6,7,8-tetrahydrofolate + NH4(+). Its function is as follows. The glycine cleavage system catalyzes the degradation of glycine. The chain is Aminomethyltransferase from Xanthomonas euvesicatoria pv. vesicatoria (strain 85-10) (Xanthomonas campestris pv. vesicatoria).